The following is a 192-amino-acid chain: Phosphoheptose isomerase (192 aa).

The 156-residue stretch at 37–192 folds into the SIS domain; sequence LADSFKAGGK…IQLIEKEMVK (156 aa). Position 52 to 54 (52 to 54) interacts with substrate; it reads NGG. Zn(2+)-binding residues include histidine 61 and glutamate 65. Substrate contacts are provided by residues glutamate 65, 93 to 94, 119 to 121, serine 124, and glutamine 172; these read ND and STS. Positions 172 and 180 each coordinate Zn(2+).

The protein belongs to the SIS family. GmhA subfamily. In terms of assembly, homotetramer. Requires Zn(2+) as cofactor.

The protein localises to the cytoplasm. The enzyme catalyses 2 D-sedoheptulose 7-phosphate = D-glycero-alpha-D-manno-heptose 7-phosphate + D-glycero-beta-D-manno-heptose 7-phosphate. Its pathway is carbohydrate biosynthesis; D-glycero-D-manno-heptose 7-phosphate biosynthesis; D-glycero-alpha-D-manno-heptose 7-phosphate and D-glycero-beta-D-manno-heptose 7-phosphate from sedoheptulose 7-phosphate: step 1/1. Catalyzes the isomerization of sedoheptulose 7-phosphate in D-glycero-D-manno-heptose 7-phosphate. The sequence is that of Phosphoheptose isomerase from Escherichia coli O139:H28 (strain E24377A / ETEC).